The sequence spans 438 residues: Putative F-box protein At5g15660 (438 aa).

The disordered stretch occupies residues 1-24 (MRRRSKKIKTENNSNPETSEERNK). Positions 22 to 68 (RNKFDEIPHDLVIEILERLPLKSVARFLTVSKLWATTIRSPDFRKSY) constitute an F-box domain.

The sequence is that of Putative F-box protein At5g15660 from Arabidopsis thaliana (Mouse-ear cress).